The following is a 433-amino-acid chain: Keratin, type I cytoskeletal 17 (433 aa).

Residues Met-1–Ser-24 are disordered. The segment at Met-1–Gly-83 is head. Phosphoserine is present on residues Ser-12 and Ser-13. A Glycyl lysine isopeptide (Lys-Gly) (interchain with G-Cter in SUMO1); alternate cross-link involves residue Lys-15. Lys-15 is covalently cross-linked (Glycyl lysine isopeptide (Lys-Gly) (interchain with G-Cter in SUMO2); alternate). 4 positions are modified to phosphoserine: Ser-25, Ser-32, Ser-34, and Ser-39. Position 44 is a phosphoserine; by RPS6KA1 (Ser-44). The tract at residues Glu-84–Tyr-120 is coil 1A. The region spanning Glu-84–Leu-395 is the IF rod domain. Thr-110 carries the post-translational modification Phosphothreonine. Residues Gln-121–Ile-138 are linker 1. The interval Glu-139–Arg-230 is coil 1B. A linker 12 region spans residues Gly-231–Ser-250. The tract at residues Arg-251–Asp-392 is coil 2. Lys-278 participates in a covalent cross-link: Glycyl lysine isopeptide (Lys-Gly) (interchain with G-Cter in SUMO2). Thr-279 carries the phosphothreonine modification. At Ser-323 the chain carries Phosphoserine. A tail region spans residues Ala-393–Arg-433. Glycyl lysine isopeptide (Lys-Gly) (interchain with G-Cter in SUMO1); alternate cross-links involve residues Lys-399, Lys-401, and Lys-420. Residues Lys-399, Lys-401, and Lys-420 each participate in a glycyl lysine isopeptide (Lys-Gly) (interchain with G-Cter in SUMO2); alternate cross-link.

This sequence belongs to the intermediate filament family. Heterodimer of a type I and a type II keratin. KRT17 associates with KRT6 isomers (KRT6A or KRT6B). Interacts with TRADD and SFN. In terms of processing, phosphorylation at Ser-44 occurs in a growth- and stress-dependent fashion in skin keratinocytes, it has no effect on filament organization.

It localises to the cytoplasm. Functionally, type I keratin involved in the formation and maintenance of various skin appendages, specifically in determining shape and orientation of hair. Required for the correct growth of hair follicles, in particular for the persistence of the anagen (growth) state. Modulates the function of TNF-alpha in the specific context of hair cycling. Regulates protein synthesis and epithelial cell growth through binding to the adapter protein SFN and by stimulating Akt/mTOR pathway. Involved in tissue repair. May be a marker of basal cell differentiation in complex epithelia and therefore indicative of a certain type of epithelial 'stem cells'. Acts as a promoter of epithelial proliferation by acting a regulator of immune response in skin: promotes Th1/Th17-dominated immune environment contributing to the development of basaloid skin tumors. May act as an autoantigen in the immunopathogenesis of psoriasis, with certain peptide regions being a major target for autoreactive T-cells and hence causing their proliferation. The sequence is that of Keratin, type I cytoskeletal 17 from Rattus norvegicus (Rat).